The sequence spans 468 residues: Maltose fermentation regulatory protein MAL33 (468 aa).

The zn(2)-C6 fungal-type DNA-binding region spans 8-34 (CDYCRVRRVKCDGKKPCSRCIEHNFDC). The Nuclear localization signal signature appears at 41–49 (KKRGSKPIG).

It belongs to the MAL13 family.

Its subcellular location is the nucleus. Its function is as follows. Regulates the coordinate transcription of structural MAL3S (maltase) and MAL3T (maltose permease) genes. The protein is Maltose fermentation regulatory protein MAL33 (MAL33) of Saccharomyces cerevisiae (strain ATCC 204508 / S288c) (Baker's yeast).